A 145-amino-acid chain; its full sequence is 3-dehydroquinate dehydratase (145 aa).

Tyr-24 serves as the catalytic Proton acceptor. Substrate contacts are provided by Asn-75, His-81, and Asp-88. His-101 acts as the Proton donor in catalysis. Substrate-binding positions include 102–103 (IS) and Arg-112.

Belongs to the type-II 3-dehydroquinase family. As to quaternary structure, homododecamer.

The enzyme catalyses 3-dehydroquinate = 3-dehydroshikimate + H2O. The protein operates within metabolic intermediate biosynthesis; chorismate biosynthesis; chorismate from D-erythrose 4-phosphate and phosphoenolpyruvate: step 3/7. Its function is as follows. Catalyzes a trans-dehydration via an enolate intermediate. The polypeptide is 3-dehydroquinate dehydratase (Rhizobium johnstonii (strain DSM 114642 / LMG 32736 / 3841) (Rhizobium leguminosarum bv. viciae)).